Reading from the N-terminus, the 711-residue chain is Polyribonucleotide nucleotidyltransferase (711 aa).

The Mg(2+) site is built by Asp-491 and Asp-497. Positions 559-618 constitute a KH domain; sequence PRLITIKINPEKIRDVIGKGGAVIRALTEETGTQIDISDEGVVTIASVDAAAGQEAKRRI. In terms of domain architecture, S1 motif spans 628–696; sequence GKIYEGTVLK…DRGRLKLSMK (69 aa).

The protein belongs to the polyribonucleotide nucleotidyltransferase family. The cofactor is Mg(2+).

Its subcellular location is the cytoplasm. The catalysed reaction is RNA(n+1) + phosphate = RNA(n) + a ribonucleoside 5'-diphosphate. In terms of biological role, involved in mRNA degradation. Catalyzes the phosphorolysis of single-stranded polyribonucleotides processively in the 3'- to 5'-direction. The sequence is that of Polyribonucleotide nucleotidyltransferase from Janthinobacterium sp. (strain Marseille) (Minibacterium massiliensis).